Here is a 439-residue protein sequence, read N- to C-terminus: 3beta-hydroxysteroid-dehydrogenase/decarboxylase isoform 1 (439 aa).

16 to 21 (GGRGFA) serves as a coordination point for NAD(+). N-linked (GlcNAc...) asparagine glycosylation is found at N75 and N158. Residues Y161 and K165 each coordinate NAD(+). K165 functions as the Proton donor in the catalytic mechanism. A glycan (N-linked (GlcNAc...) asparagine) is linked at N327. The Reticulon; atypical domain maps to 371-439 (VTETIQWKKQ…MKVFGSKKID (69 aa)). 2 consecutive transmembrane segments (helical) span residues 381-401 (TLIA…TTGS) and 405-425 (IITA…INGI).

It belongs to the 3-beta-HSD family.

Its subcellular location is the endoplasmic reticulum membrane. It catalyses the reaction a 3beta-hydroxysteroid-4alpha-carboxylate + NAD(+) = a 3-oxosteroid + CO2 + NADH. The enzyme catalyses 4alpha-carboxy-4beta,14alpha-dimethyl-9beta,19-cyclo-5alpha-ergost-24(24(1))-en-3beta-ol + NAD(+) = cycloeucalenone + CO2 + NADH. It participates in steroid biosynthesis; zymosterol biosynthesis; zymosterol from lanosterol: step 4/6. Functionally, 3beta-hydroxysteroid-dehydrogenase/decarboxylase involved in sterol synthesis. Catalyzes the formation of 3-oxosteroids from 3beta-hydroxysteroids-4alpha-carboxylate. Involved in the regulation of inflorescence internodes and leaves growth, probably by affecting auxin transporter activity possibly by altering sterol composition in the membranes. The sequence is that of 3beta-hydroxysteroid-dehydrogenase/decarboxylase isoform 1 from Arabidopsis thaliana (Mouse-ear cress).